Reading from the N-terminus, the 458-residue chain is Monomethylamine methyltransferase MtmB1 (458 aa).

Position 202 (Pyl-202) is a non-standard amino acid, pyrrolysine.

It belongs to the monomethylamine methyltransferase family. Dimer of homotrimers. Can form a complex with MtmC (MtmC1 or MtmC2).

It carries out the reaction Co(I)-[methylamine-specific corrinoid protein] + methylamine + H(+) = methyl-Co(III)-[methylamine-specific corrinoid protein] + NH4(+). It functions in the pathway one-carbon metabolism; methanogenesis from methylamine. Its function is as follows. Catalyzes the transfer of the methyl group from monomethylamine to the corrinoid cofactor of MtmC (MtmC1 or MtmC2). This is Monomethylamine methyltransferase MtmB1 (mtmB1) from Methanosarcina barkeri.